A 726-amino-acid chain; its full sequence is Beta-adducin (726 aa).

Residues 1–25 form a disordered region; the sequence is MSEETVPEAASPPPPQGQPYFDRFS. Phosphoserine is present on residues Ser-11 and Ser-25. The residue at position 55 (Thr-55) is a Phosphothreonine; by PKA. Residues Ser-60 and Ser-344 each carry the phosphoserine modification. The interval 425-444 is interaction with calmodulin; it reads KQQKEKTRWLNTPNTYLRVN. The disordered stretch occupies residues 525 to 726; that stretch reads AEKSRSPSTE…KSKKKEKVES (202 aa). Phosphoserine is present on residues Ser-530 and Ser-532. Thr-533 bears the Phosphothreonine mark. Residue Ser-535 is modified to Phosphoserine. Residues 566–586 are compositionally biased toward basic and acidic residues; that stretch reads EEYKKEVERKKLELDGEKETA. A compositionally biased stretch (low complexity) spans 588–606; it reads EEPGSPAKSAPASPVQSPA. 4 positions are modified to phosphoserine: Ser-592, Ser-596, Ser-600, and Ser-604. At Thr-611 the chain carries Phosphothreonine. Phosphoserine occurs at positions 613, 617, 619, and 621. The segment covering 621–631 has biased composition (basic and acidic residues); the sequence is SLEEGTKKTET. The segment covering 632–645 has biased composition (low complexity); that stretch reads SKAATTEPETTQPE. Residues 665 to 674 are compositionally biased toward polar residues; that stretch reads GLSQMTTSAD. Thr-675 bears the Phosphothreonine mark. Phosphoserine is present on residues Ser-686, Ser-689, Ser-693, Ser-697, Ser-699, and Ser-701. Low complexity predominate over residues 689–701; sequence SGPMSPEGSPSKS. Residues 702-726 show a composition bias toward basic residues; that stretch reads PSKKKKKFRTPSFLKKSKKKEKVES. Residue Ser-703 is modified to Phosphoserine; by PKC. Residues 704 to 721 are interaction with calmodulin; sequence KKKKKFRTPSFLKKSKKK. Ser-713 carries the post-translational modification Phosphoserine; by PKA and PKC.

It belongs to the aldolase class II family. Adducin subfamily. As to quaternary structure, heterodimer of an alpha and a beta subunit. Found in a complex with ADD2, DMTN and SLC2A1. Interacts with SLC2A1. The N-terminus is blocked. Expressed mainly in brain, spleen, kidney cortex and medulla, and heart. Also expressed in human umbilical vein endothelial cells, human vascular smooth muscle cells, kidney tubular cells and K-562 cell line.

Its subcellular location is the cytoplasm. The protein localises to the cytoskeleton. It localises to the cell membrane. In terms of biological role, membrane-cytoskeleton-associated protein that promotes the assembly of the spectrin-actin network. Binds to the erythrocyte membrane receptor SLC2A1/GLUT1 and may therefore provide a link between the spectrin cytoskeleton to the plasma membrane. Binds to calmodulin. Calmodulin binds preferentially to the beta subunit. The polypeptide is Beta-adducin (ADD2) (Homo sapiens (Human)).